The chain runs to 127 residues: MFRTMMRAKLHRATVTEANLNYVGSITIDEDLMDAVNIVENEKVQIVNNNNGARLETYVIKGERGSGVVCLNGAAARLVQPGDKVIIICYGLVTEEEVHKQEPKIAVLDDNNQIIEMLGAEKAGTIL.

The Schiff-base intermediate with substrate; via pyruvic acid role is filled by Ser-25. Ser-25 carries the pyruvic acid (Ser) modification. A substrate-binding site is contributed by Thr-57. The active-site Proton donor is Tyr-58. Gly-73 to Ala-75 is a binding site for substrate.

Belongs to the PanD family. Heterooctamer of four alpha and four beta subunits. Pyruvate is required as a cofactor. Post-translationally, is synthesized initially as an inactive proenzyme, which is activated by self-cleavage at a specific serine bond to produce a beta-subunit with a hydroxyl group at its C-terminus and an alpha-subunit with a pyruvoyl group at its N-terminus.

It localises to the cytoplasm. It carries out the reaction L-aspartate + H(+) = beta-alanine + CO2. Its pathway is cofactor biosynthesis; (R)-pantothenate biosynthesis; beta-alanine from L-aspartate: step 1/1. Catalyzes the pyruvoyl-dependent decarboxylation of aspartate to produce beta-alanine. The chain is Aspartate 1-decarboxylase from Bacillus cereus (strain G9842).